The chain runs to 151 residues: Transcription factor ATOH7 (151 aa).

The region spanning lysine 39–leucine 91 is the bHLH domain.

The protein localises to the nucleus. The protein resides in the perikaryon. Its subcellular location is the cell projection. It is found in the axon. Functionally, transcription factor that binds to DNA at the consensus sequence 5'-CAG[GC]TG-3'. Positively regulates the determination of retinal ganglion cell fate and formation of the optic nerve and retino-hypothalamic tract. Required for retinal circadian rhythm photoentrainment. Plays a role in brainstem auditory signaling and binaural processing. During retinal neurogenesis, activates its own transcription, as well as the transcription of CHRNB3 and BRN3. The chain is Transcription factor ATOH7 from Gallus gallus (Chicken).